Here is a 184-residue protein sequence, read N- to C-terminus: dCTP deaminase (184 aa).

Residues 107 to 112 (KSTYAR), 131 to 133 (TLE), Q152, Y166, and Q176 contribute to the dCTP site. E133 acts as the Proton donor/acceptor in catalysis.

The protein belongs to the dCTP deaminase family. In terms of assembly, homotrimer.

The catalysed reaction is dCTP + H2O + H(+) = dUTP + NH4(+). Its pathway is pyrimidine metabolism; dUMP biosynthesis; dUMP from dCTP (dUTP route): step 1/2. Its function is as follows. Catalyzes the deamination of dCTP to dUTP. In Gemmatimonas aurantiaca (strain DSM 14586 / JCM 11422 / NBRC 100505 / T-27), this protein is dCTP deaminase.